A 469-amino-acid polypeptide reads, in one-letter code: MMKNRVTNIHFVGIGGVGMSGIAEVLHNLGFKVSGSDQARNAATEHLGSLGIQVYPGHTAEHVNGADVVVTSTAVKKENPEVVAALEQQIPVIPRALMLAELMRFRDGIAIAGTHGKTTTTSLTASILGAAGLDPTFVIGGKLNAAGTNARLGKGEYIVAEADESDASFLHLTPIMSVVTNIDEDHMDTYGHSVEKLHQAFIDFIHRMPFYGKAFLCIDSEHVRAILPKVSKPYATYGLDDTADIYATDIENVGAQMKFTVHVQMKGHEQGSFEVVLNMPGRHNVLNALAAIGVALEVGASVEAIQKGLLGFEGVGRRFQKYGDIKLPNGGTALLVDDYGHHPVEMAATLSAARGAYPEKRLVLAFQPHRYTRTRDLFEDFTKVLNTVDALVLTEVYAAGEEPIAAADSRALARAIRVLGKLEPIYCENVADLPEMLLNVLQDGDIVLNMGAGSINRVPAALLELSKQI.

113–119 (GTHGKTT) is a binding site for ATP.

The protein belongs to the MurCDEF family.

The protein localises to the cytoplasm. The enzyme catalyses UDP-N-acetyl-alpha-D-muramate + L-alanine + ATP = UDP-N-acetyl-alpha-D-muramoyl-L-alanine + ADP + phosphate + H(+). It functions in the pathway cell wall biogenesis; peptidoglycan biosynthesis. Functionally, cell wall formation. This chain is UDP-N-acetylmuramate--L-alanine ligase, found in Neisseria meningitidis serogroup A / serotype 4A (strain DSM 15465 / Z2491).